A 203-amino-acid chain; its full sequence is MTNSSDDFTQSAEPFKLFAEWLADAAKSEPNDPNAVALATVDPDGLPNVRMVLLKDFDETGFVFYTNYESKKGQEILSAEKAAMCFHWKSLRRQVRVRGPVEKVSDAEADAYYASRPRGSRIGAWASKQSRPLESRFALEKAVAEYTAKYAIGDIPRPPYWSGFRIRPVSIEFWHDRPFRLHDRVLFTRPTPEGDWNKDRLYP.

FMN is bound by residues 50–55 (RMVLLK), 65–66 (YT), K71, K72, and Q94. A substrate-binding site is contributed by K55. 3 residues coordinate substrate: Y112, R116, and S120. FMN is bound by residues 129–130 (QS) and W174. Residue 180–182 (RLH) coordinates substrate. R184 contributes to the FMN binding site.

Belongs to the pyridoxamine 5'-phosphate oxidase family. Homodimer. It depends on FMN as a cofactor.

The enzyme catalyses pyridoxamine 5'-phosphate + O2 + H2O = pyridoxal 5'-phosphate + H2O2 + NH4(+). The catalysed reaction is pyridoxine 5'-phosphate + O2 = pyridoxal 5'-phosphate + H2O2. Its pathway is cofactor metabolism; pyridoxal 5'-phosphate salvage; pyridoxal 5'-phosphate from pyridoxamine 5'-phosphate: step 1/1. The protein operates within cofactor metabolism; pyridoxal 5'-phosphate salvage; pyridoxal 5'-phosphate from pyridoxine 5'-phosphate: step 1/1. Its function is as follows. Catalyzes the oxidation of either pyridoxine 5'-phosphate (PNP) or pyridoxamine 5'-phosphate (PMP) into pyridoxal 5'-phosphate (PLP). In Brucella canis (strain ATCC 23365 / NCTC 10854 / RM-666), this protein is Pyridoxine/pyridoxamine 5'-phosphate oxidase.